Here is a 180-residue protein sequence, read N- to C-terminus: Segregation and condensation protein B (180 aa).

The protein belongs to the ScpB family. As to quaternary structure, homodimer. Homodimerization may be required to stabilize the binding of ScpA to the Smc head domains. Component of a cohesin-like complex composed of ScpA, ScpB and the Smc homodimer, in which ScpA and ScpB bind to the head domain of Smc. The presence of the three proteins is required for the association of the complex with DNA.

The protein resides in the cytoplasm. Participates in chromosomal partition during cell division. May act via the formation of a condensin-like complex containing Smc and ScpA that pull DNA away from mid-cell into both cell halves. This chain is Segregation and condensation protein B, found in Staphylococcus epidermidis (strain ATCC 35984 / DSM 28319 / BCRC 17069 / CCUG 31568 / BM 3577 / RP62A).